The primary structure comprises 55 residues: Large ribosomal subunit protein bL33A (55 aa).

It belongs to the bacterial ribosomal protein bL33 family.

This Mycobacterium sp. (strain JLS) protein is Large ribosomal subunit protein bL33A.